The chain runs to 317 residues: MTTQLDSLRNMTVVVADTGDIDAIKKYQPQDATTNPSLILSASALPQYAPLIDEAVAYAKAQSADKAQQLIDAEDKLAVNIGLEILKIVPGRISTEVDARLSYDTQATVEKARKLIALYNAAGISNDRILIKIASTWQGIRAAEILEKEGINCNLTLLFSEAQARACAEAGVYLISPFVGRILDWYKANSDKKEYAPAEDPGVISVTKIYNYYKEYGYNTVVMGASFRNVGEITELAGCDRLTIAPALLKELQENSTALVRKLEYKGEVKAKPQPLTEAEFYWQHNSDAMAVEKLAEGIRKFAIDQEKLETMLSAKL.

Lys132 functions as the Schiff-base intermediate with substrate in the catalytic mechanism.

Belongs to the transaldolase family. Type 1 subfamily.

It localises to the cytoplasm. The catalysed reaction is D-sedoheptulose 7-phosphate + D-glyceraldehyde 3-phosphate = D-erythrose 4-phosphate + beta-D-fructose 6-phosphate. It participates in carbohydrate degradation; pentose phosphate pathway; D-glyceraldehyde 3-phosphate and beta-D-fructose 6-phosphate from D-ribose 5-phosphate and D-xylulose 5-phosphate (non-oxidative stage): step 2/3. Its function is as follows. Transaldolase is important for the balance of metabolites in the pentose-phosphate pathway. The polypeptide is Transaldolase (Haemophilus influenzae (strain ATCC 51907 / DSM 11121 / KW20 / Rd)).